The primary structure comprises 784 residues: LPS-assembly protein LptD (784 aa).

A signal peptide spans 1 to 24 (MKKRIPTLLATMIATALYSQQGLA). Cystine bridges form between Cys-31–Cys-724 and Cys-173–Cys-725.

The protein belongs to the LptD family. In terms of assembly, component of the lipopolysaccharide transport and assembly complex. Interacts with LptE and LptA. In terms of processing, contains two intramolecular disulfide bonds.

The protein localises to the cell outer membrane. In terms of biological role, together with LptE, is involved in the assembly of lipopolysaccharide (LPS) at the surface of the outer membrane. This Shigella flexneri protein is LPS-assembly protein LptD.